Reading from the N-terminus, the 439-residue chain is Adenylosuccinate synthetase (439 aa).

Residues 13–19 (GDEGKGK) and 41–43 (GHT) each bind GTP. D14 acts as the Proton acceptor in catalysis. D14 and G41 together coordinate Mg(2+). IMP-binding positions include 14–17 (DEGK), 39–42 (NAGH), T130, R144, Q226, T241, and R313. H42 acts as the Proton donor in catalysis. 309 to 315 (ASTGRQR) contacts substrate. GTP contacts are provided by residues R315, 341–343 (KLD), and 422–424 (STG).

It belongs to the adenylosuccinate synthetase family. In terms of assembly, homodimer. It depends on Mg(2+) as a cofactor.

Its subcellular location is the cytoplasm. The catalysed reaction is IMP + L-aspartate + GTP = N(6)-(1,2-dicarboxyethyl)-AMP + GDP + phosphate + 2 H(+). The protein operates within purine metabolism; AMP biosynthesis via de novo pathway; AMP from IMP: step 1/2. Plays an important role in the de novo pathway of purine nucleotide biosynthesis. Catalyzes the first committed step in the biosynthesis of AMP from IMP. The sequence is that of Adenylosuccinate synthetase from Acinetobacter baylyi (strain ATCC 33305 / BD413 / ADP1).